Consider the following 214-residue polypeptide: Cysteine-rich venom protein LEI1 (214 aa).

The signal sequence occupies residues Met-1–Gly-18. One can recognise an SCP domain in the interval Val-37–Tyr-165. Disulfide bonds link Cys-74-Cys-152, Cys-91-Cys-166, Cys-147-Cys-163, Cys-185-Cys-192, and Cys-188-Cys-197. The ShKT domain maps to Cys-201–Val-214.

Belongs to the CRISP family. Expressed by the venom gland.

It localises to the secreted. Blocks contraction of smooth muscle elicited by high potassium-induced depolarization, but does not block caffeine-stimulated contraction. May target voltage-gated calcium channels on smooth muscle. The polypeptide is Cysteine-rich venom protein LEI1 (Leioheterodon madagascariensis (Malagasy giant hognose snake)).